The following is a 697-amino-acid chain: UBA domain-containing protein 7 (697 aa).

The interval 1 to 94 is disordered; that stretch reads MDDLLDFNFY…STPKSSNYDP (94 aa). Positions 13-32 are enriched in low complexity; sequence STPSNQNNYSNNNSRTPSYS. Basic and acidic residues predominate over residues 62–77; sequence KKTDNKISLKELERQK. Over residues 81-92 the composition is skewed to polar residues; that stretch reads PDSNSTPKSSNY. Residues 181–221 form the UBA domain; it reads KLSSNEMYEKLRDLGFSDDQSRLALENSGSLEDAIEYILEK. The segment at 306 to 346 is disordered; that stretch reads PEILPKTPIPKRKPHKVPMNEKVSEDRITTNQSRSGNDESS. A compositionally biased stretch (basic and acidic residues) spans 323–333; the sequence is PMNEKVSEDRI. The span at 334–345 shows a compositional bias: polar residues; it reads TTNQSRSGNDES. A TPR repeat occupies 412 to 445; the sequence is VEEQQSTGNELFRKGDFSQAIEEFTNSLSQLPAK. The disordered stretch occupies residues 547–573; the sequence is ISSHSSESHSKRTTQQPKSTPNHTNIK. Residues 559–573 show a composition bias toward polar residues; that stretch reads TTQQPKSTPNHTNIK. The 64-residue stretch at 633 to 696 folds into the J domain; sequence CRWQKVSLSE…AWELFKQQND (64 aa).

This is UBA domain-containing protein 7 (ucp7) from Schizosaccharomyces pombe (strain 972 / ATCC 24843) (Fission yeast).